The sequence spans 629 residues: DNA mismatch repair protein MutL (629 aa).

The protein belongs to the DNA mismatch repair MutL/HexB family.

In terms of biological role, this protein is involved in the repair of mismatches in DNA. It is required for dam-dependent methyl-directed DNA mismatch repair. May act as a 'molecular matchmaker', a protein that promotes the formation of a stable complex between two or more DNA-binding proteins in an ATP-dependent manner without itself being part of a final effector complex. The polypeptide is DNA mismatch repair protein MutL (Rhodospirillum rubrum (strain ATCC 11170 / ATH 1.1.1 / DSM 467 / LMG 4362 / NCIMB 8255 / S1)).